The following is a 1128-amino-acid chain: Inactive phospholipase C-like protein 2 (1128 aa).

Positions 1–129 (MAECGRGAAG…KKTVSFSSMP (129 aa)) are disordered. Ala2 carries the N-acetylalanine modification. Ser16 is modified (phosphoserine). The span at 20–30 (ALGAKGALKAG) shows a compositional bias: low complexity. Residues 31 to 43 (AGEGGGGGGGGRL) are compositionally biased toward gly residues. At Thr85 the chain carries Phosphothreonine. Positions 142 to 252 (NSMVEGSELK…WVTGLRYLIS (111 aa)) constitute a PH domain. A PI-PLC X-box domain is found at 427–571 (QDMKQPLSHY…LKGKILIKAK (145 aa)). Thr585 bears the Phosphothreonine mark. One can recognise a PI-PLC Y-box domain in the interval 619 to 735 (LSELVSICKS…GYVLRPAIMR (117 aa)). The 130-residue stretch at 735 to 864 (REEVSFFSAN…TGYRHVPLQS (130 aa)) folds into the C2 domain. The segment at 1100–1128 (KPGTENSEAQKPRRSLEAIPEKASDENGD) is disordered. Residues 1107-1128 (EAQKPRRSLEAIPEKASDENGD) show a composition bias toward basic and acidic residues. Ser1114 carries the phosphoserine modification.

Ubiquitously expressed, with a strong expression in skeletal muscle.

It is found in the cytoplasm. May play an role in the regulation of Ins(1,4,5)P3 around the endoplasmic reticulum. This chain is Inactive phospholipase C-like protein 2 (Plcl2), found in Mus musculus (Mouse).